A 341-amino-acid chain; its full sequence is tRNA N6-adenosine threonylcarbamoyltransferase (341 aa).

Fe cation contacts are provided by H113 and H117. Residues 136–140, D169, G182, and N280 each bind substrate; that span reads IISGG. A Fe cation-binding site is contributed by D308.

Belongs to the KAE1 / TsaD family. Fe(2+) is required as a cofactor.

The protein resides in the cytoplasm. The catalysed reaction is L-threonylcarbamoyladenylate + adenosine(37) in tRNA = N(6)-L-threonylcarbamoyladenosine(37) in tRNA + AMP + H(+). Functionally, required for the formation of a threonylcarbamoyl group on adenosine at position 37 (t(6)A37) in tRNAs that read codons beginning with adenine. Is involved in the transfer of the threonylcarbamoyl moiety of threonylcarbamoyl-AMP (TC-AMP) to the N6 group of A37, together with TsaE and TsaB. TsaD likely plays a direct catalytic role in this reaction. This chain is tRNA N6-adenosine threonylcarbamoyltransferase, found in Anaplasma marginale (strain St. Maries).